The primary structure comprises 288 residues: Formamidopyrimidine-DNA glycosylase (288 aa).

Catalysis depends on Pro2, which acts as the Schiff-base intermediate with DNA. Residue Glu3 is the Proton donor of the active site. The Proton donor; for beta-elimination activity role is filled by Lys59. 3 residues coordinate DNA: His93, Arg112, and Lys168. The segment at Asn254–Arg288 adopts an FPG-type zinc-finger fold. Arg278 functions as the Proton donor; for delta-elimination activity in the catalytic mechanism.

Belongs to the FPG family. As to quaternary structure, monomer. Zn(2+) serves as cofactor.

The catalysed reaction is Hydrolysis of DNA containing ring-opened 7-methylguanine residues, releasing 2,6-diamino-4-hydroxy-5-(N-methyl)formamidopyrimidine.. It catalyses the reaction 2'-deoxyribonucleotide-(2'-deoxyribose 5'-phosphate)-2'-deoxyribonucleotide-DNA = a 3'-end 2'-deoxyribonucleotide-(2,3-dehydro-2,3-deoxyribose 5'-phosphate)-DNA + a 5'-end 5'-phospho-2'-deoxyribonucleoside-DNA + H(+). Its function is as follows. Involved in base excision repair of DNA damaged by oxidation or by mutagenic agents. Acts as a DNA glycosylase that recognizes and removes damaged bases. Has a preference for oxidized purines, such as 7,8-dihydro-8-oxoguanine (8-oxoG). Has AP (apurinic/apyrimidinic) lyase activity and introduces nicks in the DNA strand. Cleaves the DNA backbone by beta-delta elimination to generate a single-strand break at the site of the removed base with both 3'- and 5'-phosphates. This Corynebacterium jeikeium (strain K411) protein is Formamidopyrimidine-DNA glycosylase.